Consider the following 101-residue polypeptide: Protein Tat (101 aa).

The segment at 1–20 (MEPVDPNLEPWKHPGSQPTT) is disordered. An interaction with human CREBBP region spans residues 1–24 (MEPVDPNLEPWKHPGSQPTTACSN). The interval 1–48 (MEPVDPNLEPWKHPGSQPTTACSNCYCKVCCWHCQLCFLKKGLGISYG) is transactivation. Zn(2+) is bound by residues Cys22, Cys25, and Cys27. Positions 22-37 (CSNCYCKVCCWHCQLC) are cysteine-rich. The residue at position 28 (Lys28) is an N6-acetyllysine; by host PCAF. Zn(2+) is bound by residues Cys30, His33, Cys34, and Cys37. The tract at residues 38 to 48 (FLKKGLGISYG) is core. The tract at residues 48–101 (GKKKRKPRRGPPQGSKDHQTLIPKQPLPQSQRVSAGQEESKKKVESKAKTDRFA) is disordered. The Nuclear localization signal, RNA-binding (TAR), and protein transduction signature appears at 49–57 (KKKRKPRRG). Residues 49–86 (KKKRKPRRGPPQGSKDHQTLIPKQPLPQSQRVSAGQEE) are interaction with the host capping enzyme RNGTT. 2 positions are modified to N6-acetyllysine; by host EP300 and GCN5L2: Lys50 and Lys51. Residue Arg52 is modified to Asymmetric dimethylarginine; by host PRMT6. Residue Lys71 forms a Glycyl lysine isopeptide (Lys-Gly) (interchain with G-Cter in ubiquitin) linkage. Residues 85 to 101 (EESKKKVESKAKTDRFA) show a composition bias toward basic and acidic residues.

The protein belongs to the lentiviruses Tat family. Interacts with host CCNT1. Associates with the P-TEFb complex composed at least of Tat, P-TEFb (CDK9 and CCNT1), TAR RNA, RNA Pol II. Recruits the HATs CREBBP, TAF1/TFIID, EP300, PCAF and GCN5L2. Interacts with host KAT5/Tip60; this interaction targets the latter to degradation. Interacts with the host deacetylase SIRT1. Interacts with host capping enzyme RNGTT; this interaction stimulates RNGTT. Binds to host KDR, and to the host integrins ITGAV/ITGB3 and ITGA5/ITGB1. Interacts with host KPNB1/importin beta-1 without previous binding to KPNA1/importin alpha-1. Interacts with EIF2AK2. Interacts with host nucleosome assembly protein NAP1L1; this interaction may be required for the transport of Tat within the nucleus, since the two proteins interact at the nuclear rim. Interacts with host C1QBP/SF2P32; this interaction involves lysine-acetylated Tat. Interacts with the host chemokine receptors CCR2, CCR3 and CXCR4. Interacts with host DPP4/CD26; this interaction may trigger an anti-proliferative effect. Interacts with host LDLR. Interacts with the host extracellular matrix metalloproteinase MMP1. Interacts with host PRMT6; this interaction mediates Tat's methylation. Interacts with, and is ubiquitinated by MDM2/Hdm2. Interacts with host PSMC3 and HTATIP2. Interacts with STAB1; this interaction may overcome SATB1-mediated repression of IL2 and IL2RA (interleukin) in T cells by binding to the same domain than HDAC1. Interacts (when acetylated) with human CDK13, thereby increasing HIV-1 mRNA splicing and promoting the production of the doubly spliced HIV-1 protein Nef. Interacts with host TBP; this interaction modulates the activity of transcriptional pre-initiation complex. Interacts with host RELA. Interacts with host PLSCR1; this interaction negatively regulates Tat transactivation activity by altering its subcellular distribution. Post-translationally, asymmetrical arginine methylation by host PRMT6 seems to diminish the transactivation capacity of Tat and affects the interaction with host CCNT1. In terms of processing, acetylation by EP300, CREBBP, GCN5L2/GCN5 and PCAF regulates the transactivation activity of Tat. EP300-mediated acetylation of Lys-50 promotes dissociation of Tat from the TAR RNA through the competitive binding to PCAF's bromodomain. In addition, the non-acetylated Tat's N-terminus can also interact with PCAF. PCAF-mediated acetylation of Lys-28 enhances Tat's binding to CCNT1. Lys-50 is deacetylated by SIRT1. Polyubiquitination by host MDM2 does not target Tat to degradation, but activates its transactivation function and fosters interaction with CCNT1 and TAR RNA. Post-translationally, phosphorylated by EIF2AK2 on serine and threonine residues adjacent to the basic region important for TAR RNA binding and function. Phosphorylation of Tat by EIF2AK2 is dependent on the prior activation of EIF2AK2 by dsRNA.

Its subcellular location is the host nucleus. The protein resides in the host nucleolus. The protein localises to the host cytoplasm. It localises to the secreted. Functionally, transcriptional activator that increases RNA Pol II processivity, thereby increasing the level of full-length viral transcripts. Recognizes a hairpin structure at the 5'-LTR of the nascent viral mRNAs referred to as the transactivation responsive RNA element (TAR) and recruits the cyclin T1-CDK9 complex (P-TEFb complex) that will in turn hyperphosphorylate the RNA polymerase II to allow efficient elongation. The CDK9 component of P-TEFb and other Tat-activated kinases hyperphosphorylate the C-terminus of RNA Pol II that becomes stabilized and much more processive. Other factors such as HTATSF1/Tat-SF1, SUPT5H/SPT5, and HTATIP2 are also important for Tat's function. Besides its effect on RNA Pol II processivity, Tat induces chromatin remodeling of proviral genes by recruiting the histone acetyltransferases (HATs) CREBBP, EP300 and PCAF to the chromatin. This also contributes to the increase in proviral transcription rate, especially when the provirus integrates in transcriptionally silent region of the host genome. To ensure maximal activation of the LTR, Tat mediates nuclear translocation of NF-kappa-B by interacting with host RELA. Through its interaction with host TBP, Tat may also modulate transcription initiation. Tat can reactivate a latently infected cell by penetrating in it and transactivating its LTR promoter. In the cytoplasm, Tat is thought to act as a translational activator of HIV-1 mRNAs. Its function is as follows. Extracellular circulating Tat can be endocytosed by surrounding uninfected cells via the binding to several surface receptors such as CD26, CXCR4, heparan sulfate proteoglycans (HSPG) or LDLR. Neurons are rarely infected, but they internalize Tat via their LDLR. Through its interaction with nuclear HATs, Tat is potentially able to control the acetylation-dependent cellular gene expression. Modulates the expression of many cellular genes involved in cell survival, proliferation or in coding for cytokines or cytokine receptors. Tat plays a role in T-cell and neurons apoptosis. Tat induced neurotoxicity and apoptosis probably contribute to neuroAIDS. Circulating Tat also acts as a chemokine-like and/or growth factor-like molecule that binds to specific receptors on the surface of the cells, affecting many cellular pathways. In the vascular system, Tat binds to ITGAV/ITGB3 and ITGA5/ITGB1 integrins dimers at the surface of endothelial cells and competes with bFGF for heparin-binding sites, leading to an excess of soluble bFGF. The protein is Protein Tat of Human immunodeficiency virus type 1 group M subtype A (isolate U455) (HIV-1).